We begin with the raw amino-acid sequence, 191 residues long: Large ribosomal subunit protein bL9 (191 aa).

A disordered region spans residues 149-191; sequence EEAERQSKGESLTSADAIYGVDEDALRPEDFFDPEADGNEDDE. Residues 179-191 are compositionally biased toward acidic residues; sequence FFDPEADGNEDDE.

It belongs to the bacterial ribosomal protein bL9 family.

Functionally, binds to the 23S rRNA. The polypeptide is Large ribosomal subunit protein bL9 (rplI) (Agrobacterium fabrum (strain C58 / ATCC 33970) (Agrobacterium tumefaciens (strain C58))).